A 347-amino-acid chain; its full sequence is Eukaryotic translation initiation factor 3 subunit I (347 aa).

WD repeat units lie at residues 8–47 (GHER…RLGT), 50–89 (GHTG…VIHT), 91–135 (TAPV…VTKE), 151–190 (ENHK…FITS), 193–232 (LHTQ…QLKS), and 290–329 (GHFG…FDFK).

Belongs to the eIF-3 subunit I family. As to quaternary structure, component of the eukaryotic translation initiation factor 3 (eIF-3) complex.

The protein resides in the cytoplasm. Functionally, component of the eukaryotic translation initiation factor 3 (eIF-3) complex, which is involved in protein synthesis of a specialized repertoire of mRNAs and, together with other initiation factors, stimulates binding of mRNA and methionyl-tRNAi to the 40S ribosome. The eIF-3 complex specifically targets and initiates translation of a subset of mRNAs involved in cell proliferation. This Vanderwaltozyma polyspora (strain ATCC 22028 / DSM 70294 / BCRC 21397 / CBS 2163 / NBRC 10782 / NRRL Y-8283 / UCD 57-17) (Kluyveromyces polysporus) protein is Eukaryotic translation initiation factor 3 subunit I.